The chain runs to 344 residues: Mitochondrial genome maintenance exonuclease 1 (344 aa).

Residues D238, D251, and K253 contribute to the active site. S343 is modified (phosphoserine).

Belongs to the MGME1 family.

It localises to the mitochondrion. In terms of biological role, metal-dependent single-stranded DNA (ssDNA) exonuclease involved in mitochondrial genome maintenance. Has preference for 5'-3' exonuclease activity but is also capable of endonuclease activity on linear substrates. Necessary for maintenance of proper 7S DNA levels. Probably involved in mitochondrial DNA (mtDNA) repair, possibly via the processing of displaced DNA containing Okazaki fragments during RNA-primed DNA synthesis on the lagging strand or via processing of DNA flaps during long-patch base excision repair. Specifically binds 5-hydroxymethylcytosine (5hmC)-containing DNA in stem cells. This Homo sapiens (Human) protein is Mitochondrial genome maintenance exonuclease 1.